The primary structure comprises 741 residues: mRNA decapping complex subunit 2 (741 aa).

Residues 1–243 (MSFTNATFSQ…KKRNIANNTT (243 aa)) form an interaction with pdc1 region. In terms of domain architecture, Nudix hydrolase spans 94–227 (TRIPVRGAIM…KFYMVIPFLA (134 aa)). The Nudix box signature appears at 128 to 149 (GKIDKDESDVDCAIREVYEETG). Residues Arg-167 and Tyr-220 each contribute to the ATP site. Composition is skewed to polar residues over residues 268–278 (TAPSDLATPQP) and 439–453 (YGSS…QTQQ). Disordered stretches follow at residues 268-289 (TAPS…VESH), 425-453 (SVSS…QTQQ), 525-552 (TKKF…PNAN), 592-616 (GLPT…SQVK), and 654-721 (VSPQ…FKGS). Basic and acidic residues-rich tracts occupy residues 606–616 (NNERKASSQVK), 681–690 (ENSETNKNHV), and 707–721 (DQKK…FKGS).

It belongs to the Nudix hydrolase family. DCP2 subfamily. Component of the decapping complex composed of dcp1 and dcp2. Interacts with edc3. Interacts with pdc1; via N-terminus. Interacts with pdc2. It depends on Mn(2+) as a cofactor.

Its subcellular location is the cytoplasm. The protein localises to the P-body. Functionally, catalytic component of the decapping complex necessary for the degradation of mRNAs, both in normal mRNA turnover and in nonsense-mediated mRNA decay. Removes the 7-methyl guanine cap structure from mRNA molecules, yielding a 5'-phosphorylated mRNA fragment and 7m-GDP. Decapping is the major pathway of mRNA degradation in yeast. It occurs through deadenylation, decapping and subsequent 5' to 3' exonucleolytic decay of the transcript body. The protein is mRNA decapping complex subunit 2 (dcp2) of Schizosaccharomyces pombe (strain 972 / ATCC 24843) (Fission yeast).